The sequence spans 431 residues: Trigger factor (431 aa).

A PPIase FKBP-type domain is found at 161–246; that stretch reads DDRVTIDFVG…LKKVENIVLP (86 aa).

This sequence belongs to the FKBP-type PPIase family. Tig subfamily.

It is found in the cytoplasm. It carries out the reaction [protein]-peptidylproline (omega=180) = [protein]-peptidylproline (omega=0). Functionally, involved in protein export. Acts as a chaperone by maintaining the newly synthesized protein in an open conformation. Functions as a peptidyl-prolyl cis-trans isomerase. This is Trigger factor from Glaesserella parasuis serovar 5 (strain SH0165) (Haemophilus parasuis).